The sequence spans 341 residues: Glyceraldehyde-3-phosphate dehydrogenase, cytosolic (341 aa).

Residues 14–15 (RI) and D36 contribute to the NAD(+) site. Residues 153–155 (SCT), T184, 213–214 (TG), and R236 contribute to the D-glyceraldehyde 3-phosphate site. C154 serves as the catalytic Nucleophile. N318 is a binding site for NAD(+).

The protein belongs to the glyceraldehyde-3-phosphate dehydrogenase family. In terms of assembly, homotetramer.

The protein resides in the cytoplasm. It carries out the reaction D-glyceraldehyde 3-phosphate + phosphate + NAD(+) = (2R)-3-phospho-glyceroyl phosphate + NADH + H(+). It functions in the pathway carbohydrate degradation; glycolysis; pyruvate from D-glyceraldehyde 3-phosphate: step 1/5. Key enzyme in glycolysis that catalyzes the first step of the pathway by converting D-glyceraldehyde 3-phosphate (G3P) into 3-phospho-D-glyceroyl phosphate. Essential for the maintenance of cellular ATP levels and carbohydrate metabolism. This is Glyceraldehyde-3-phosphate dehydrogenase, cytosolic (GAPC) from Chlamydomonas reinhardtii (Chlamydomonas smithii).